A 518-amino-acid chain; its full sequence is Apolipoprotein N-acyltransferase (518 aa).

The next 6 helical transmembrane spans lie at 22 to 42, 63 to 83, 101 to 121, 134 to 154, 174 to 194, and 202 to 222; these read LAFI…LWII, FFHW…WVHV, ALLA…LAWF, LLFP…LTGF, IIGA…LALC, and LLIL…LSQI. The CN hydrolase domain occupies 234-484; sequence VQGNIPQSMK…TGVLSATIPL (251 aa). Residue glutamate 273 is the Proton acceptor of the active site. Lysine 343 is an active-site residue. The active-site Nucleophile is cysteine 395. The helical transmembrane segment at 492 to 512 threads the bilayer; that stretch reads AKIGQTPLLILCGALLLVGFI.

It belongs to the CN hydrolase family. Apolipoprotein N-acyltransferase subfamily.

Its subcellular location is the cell inner membrane. It carries out the reaction N-terminal S-1,2-diacyl-sn-glyceryl-L-cysteinyl-[lipoprotein] + a glycerophospholipid = N-acyl-S-1,2-diacyl-sn-glyceryl-L-cysteinyl-[lipoprotein] + a 2-acyl-sn-glycero-3-phospholipid + H(+). Its pathway is protein modification; lipoprotein biosynthesis (N-acyl transfer). Catalyzes the phospholipid dependent N-acylation of the N-terminal cysteine of apolipoprotein, the last step in lipoprotein maturation. The polypeptide is Apolipoprotein N-acyltransferase (Shewanella oneidensis (strain ATCC 700550 / JCM 31522 / CIP 106686 / LMG 19005 / NCIMB 14063 / MR-1)).